The chain runs to 169 residues: Ribosome maturation factor RimM (169 aa).

One can recognise a PRC barrel domain in the interval 92–167 (PKDTYFICDI…YMKIKVVEGL (76 aa)).

This sequence belongs to the RimM family. Binds ribosomal protein uS19.

Its subcellular location is the cytoplasm. Its function is as follows. An accessory protein needed during the final step in the assembly of 30S ribosomal subunit, possibly for assembly of the head region. Essential for efficient processing of 16S rRNA. May be needed both before and after RbfA during the maturation of 16S rRNA. It has affinity for free ribosomal 30S subunits but not for 70S ribosomes. The protein is Ribosome maturation factor RimM of Caldicellulosiruptor bescii (strain ATCC BAA-1888 / DSM 6725 / KCTC 15123 / Z-1320) (Anaerocellum thermophilum).